Here is a 369-residue protein sequence, read N- to C-terminus: Eukaryotic translation initiation factor 3 subunit F (369 aa).

One can recognise an MPN domain in the interval V31 to A170. Residues L309 to R334 are compositionally biased toward basic and acidic residues. A disordered region spans residues L309–E369. Gly residues predominate over residues G335 to R353. Basic and acidic residues predominate over residues G354–E369.

This sequence belongs to the eIF-3 subunit F family. As to quaternary structure, component of the eukaryotic translation initiation factor 3 (eIF-3) complex.

The protein localises to the cytoplasm. Its function is as follows. Component of the eukaryotic translation initiation factor 3 (eIF-3) complex, which is involved in protein synthesis of a specialized repertoire of mRNAs and, together with other initiation factors, stimulates binding of mRNA and methionyl-tRNAi to the 40S ribosome. The eIF-3 complex specifically targets and initiates translation of a subset of mRNAs involved in cell proliferation. This chain is Eukaryotic translation initiation factor 3 subunit F, found in Neurospora crassa (strain ATCC 24698 / 74-OR23-1A / CBS 708.71 / DSM 1257 / FGSC 987).